An 87-amino-acid polypeptide reads, in one-letter code: MSMLSFLLGEKKKTASVAKERLQIILARERVGGNGGGPDYLPALQKELMAVISKYVDIDVNDIKVHLERQENLEVLEVKIELPDASR.

The protein belongs to the MinE family.

Functionally, prevents the cell division inhibition by proteins MinC and MinD at internal division sites while permitting inhibition at polar sites. This ensures cell division at the proper site by restricting the formation of a division septum at the midpoint of the long axis of the cell. The sequence is that of Cell division topological specificity factor from Delftia acidovorans (strain DSM 14801 / SPH-1).